Reading from the N-terminus, the 165-residue chain is UPF0114 protein in repA1-repA2 intergenic region (165 aa).

3 consecutive transmembrane segments (helical) span residues 10-32 (YASR…LLTL), 53-75 (LVLV…MVMF), and 134-156 (DQIM…MACI).

Belongs to the UPF0114 family.

It localises to the cell membrane. This chain is UPF0114 protein in repA1-repA2 intergenic region, found in Buchnera aphidicola subsp. Baizongia pistaciae (strain Bp).